A 758-amino-acid polypeptide reads, in one-letter code: Catalase-peroxidase (758 aa).

A compositionally biased stretch (polar residues) spans 1–10 (MSDTQDNAPV). The interval 1 to 57 (MSDTQDNAPVSAQGVDQKAAAGCPVAHDSVTAHGSESESPAIDSPSAVGGGRPRTNR) is disordered. A cross-link (tryptophyl-tyrosyl-methioninium (Trp-Tyr) (with M-276)) is located at residues 128–250 (WHAAGTYRIH…VGATEMGLIY (123 aa)). Residue histidine 129 is the Proton acceptor of the active site. A cross-link (tryptophyl-tyrosyl-methioninium (Tyr-Met) (with W-128)) is located at residues 250-276 (YVNPEGPRGNADPASAAHFIRETFRRM). Heme b is bound at residue histidine 291.

It belongs to the peroxidase family. Peroxidase/catalase subfamily. Homodimer or homotetramer. The cofactor is heme b. Formation of the three residue Trp-Tyr-Met cross-link is important for the catalase, but not the peroxidase activity of the enzyme.

The catalysed reaction is H2O2 + AH2 = A + 2 H2O. It catalyses the reaction 2 H2O2 = O2 + 2 H2O. Bifunctional enzyme with both catalase and broad-spectrum peroxidase activity. The sequence is that of Catalase-peroxidase from Salinispora tropica (strain ATCC BAA-916 / DSM 44818 / JCM 13857 / NBRC 105044 / CNB-440).